Here is a 391-residue protein sequence, read N- to C-terminus: Probable sugar efflux transporter (391 aa).

Helical transmembrane passes span 16–36, 51–71, 82–102, 103–123, 138–158, 170–190, 210–230, 247–267, 277–297, 300–320, 338–358, and 361–381; these read VFVF…PVAL, VGLM…PLML, LLFL…AWNF, WVLL…WSIT, QALG…LPLG, TFGV…KLLP, PLLV…FTTY, ITTL…FLFG, FIAF…VFKN, WVIF…TIAL, IFSG…SIVI, and LGLE…LFWL.

This sequence belongs to the major facilitator superfamily. SotB (TC 2.A.1.2) family.

The protein resides in the cell inner membrane. Involved in the efflux of sugars. The physiological role may be the reduction of the intracellular concentration of toxic sugars or sugar metabolites. This chain is Probable sugar efflux transporter, found in Helicobacter pylori (strain P12).